Reading from the N-terminus, the 65-residue chain is Large ribosomal subunit protein bL28 (65 aa).

Positions 1 to 26 (MARRDDLTNKGPMSGNKRSHALNATK) are disordered. A compositionally biased stretch (basic residues) spans 17–26 (KRSHALNATK).

Belongs to the bacterial ribosomal protein bL28 family.

This is Large ribosomal subunit protein bL28 from Mycoplasma mobile (strain ATCC 43663 / 163K / NCTC 11711) (Mesomycoplasma mobile).